The following is a 344-amino-acid chain: Dihydroorotase (344 aa).

Zn(2+) contacts are provided by His13 and His15. Residues 15–17 (HLR) and Asn41 contribute to the substrate site. Residues Lys98, His135, and His173 each contribute to the Zn(2+) site. At Lys98 the chain carries N6-carboxylysine. His135 lines the substrate pocket. Residue Leu218 coordinates substrate. Position 247 (Asp247) interacts with Zn(2+). Asp247 is an active-site residue. Substrate contacts are provided by His251 and Ala263.

It belongs to the metallo-dependent hydrolases superfamily. DHOase family. Class II DHOase subfamily. In terms of assembly, homodimer. Requires Zn(2+) as cofactor.

It catalyses the reaction (S)-dihydroorotate + H2O = N-carbamoyl-L-aspartate + H(+). It participates in pyrimidine metabolism; UMP biosynthesis via de novo pathway; (S)-dihydroorotate from bicarbonate: step 3/3. In terms of biological role, catalyzes the reversible cyclization of carbamoyl aspartate to dihydroorotate. The chain is Dihydroorotase from Neisseria gonorrhoeae (strain ATCC 700825 / FA 1090).